Consider the following 777-residue polypeptide: Cullin-3 (777 aa).

Residues 568-596 (YPPPKASMSNEENGPGPSSSGESMKERKP) form a disordered region. The segment covering 576–589 (SNEENGPGPSSSGE) has biased composition (low complexity). The Cullin neddylation domain occupies 707–769 (DRKLEVEAAI…REYLARDEHD (63 aa)). A Glycyl lysine isopeptide (Lys-Gly) (interchain with G-Cter in NEDD8) cross-link involves residue lysine 721.

Belongs to the cullin family. In terms of assembly, probable component of multiple cullin-RING-based BCB (BTB-CUL3-BTB) E3 ubiquitin-protein ligase complexes formed by cul-3, rbx-1 and a variable BTB domain-containing protein acting as both, adapter to cullin and substrate recognition component. Interacts with bath-15, bath-40, bath-41, bath-42, C17F4.8, tag-303, D2045.8, F57C2.1, ZC239.15 and B0281.5. Interacts with mel-26 (via BTB domain). Interacts with dcn-1. Post-translationally, neddylated. Deneddylated via its interaction with the COP9 signalosome (CSN) complex.

Its subcellular location is the cytoplasm. It localises to the nucleus. The protein operates within protein modification; protein ubiquitination. In terms of biological role, probable core component of multiple cullin-RING-based BCB (BTB-CUL3-BTB) E3 ubiquitin-protein ligase complexes which mediate the ubiquitination and subsequent proteasomal degradation of target proteins. Probably acts as a scaffold protein which may contribute to catalysis through positioning of the substrate and the ubiquitin-conjugating enzyme. Required to target mei-3/katanin for degradation at the meiosis to mitosis transition via its neddylation and deneddylation. Functions in ubiquitin-mediated degradation of CKIs to target cki-1 for degradation. Regulates microtubule stability in the early embryo. In body wall muscles, involved in the organization of myosin thick filaments, likely by regulating the degradation of microtubule severing protein mei-1 downstream of unc-89. Together with spop-1, may promote the ubiquitination and proteasomal degradation of target bromodomain-containing proteins such as bet-1. This chain is Cullin-3, found in Caenorhabditis elegans.